A 201-amino-acid chain; its full sequence is Recombination protein RecR (201 aa).

The segment at 60–75 (CTSCGNVDTSDPCTIC) adopts a C4-type zinc-finger fold. A Toprim domain is found at 83 to 178 (TTLVVVEDVS…KVTRLAHGVP (96 aa)).

Belongs to the RecR family.

In terms of biological role, may play a role in DNA repair. It seems to be involved in an RecBC-independent recombinational process of DNA repair. It may act with RecF and RecO. This chain is Recombination protein RecR, found in Methylobacterium radiotolerans (strain ATCC 27329 / DSM 1819 / JCM 2831 / NBRC 15690 / NCIMB 10815 / 0-1).